A 586-amino-acid polypeptide reads, in one-letter code: 2-succinyl-5-enolpyruvyl-6-hydroxy-3-cyclohexene-1-carboxylate synthase (586 aa).

Belongs to the TPP enzyme family. MenD subfamily. In terms of assembly, homodimer. Mg(2+) serves as cofactor. Mn(2+) is required as a cofactor. It depends on thiamine diphosphate as a cofactor.

The enzyme catalyses isochorismate + 2-oxoglutarate + H(+) = 5-enolpyruvoyl-6-hydroxy-2-succinyl-cyclohex-3-ene-1-carboxylate + CO2. The protein operates within quinol/quinone metabolism; 1,4-dihydroxy-2-naphthoate biosynthesis; 1,4-dihydroxy-2-naphthoate from chorismate: step 2/7. Its pathway is quinol/quinone metabolism; menaquinone biosynthesis. Catalyzes the thiamine diphosphate-dependent decarboxylation of 2-oxoglutarate and the subsequent addition of the resulting succinic semialdehyde-thiamine pyrophosphate anion to isochorismate to yield 2-succinyl-5-enolpyruvyl-6-hydroxy-3-cyclohexene-1-carboxylate (SEPHCHC). The chain is 2-succinyl-5-enolpyruvyl-6-hydroxy-3-cyclohexene-1-carboxylate synthase from Natronomonas pharaonis (strain ATCC 35678 / DSM 2160 / CIP 103997 / JCM 8858 / NBRC 14720 / NCIMB 2260 / Gabara) (Halobacterium pharaonis).